The primary structure comprises 147 residues: Hemoglobin subunit beta (147 aa).

Position 2 is an N-acetylvaline (Val2). The 145-residue stretch at 3 to 147 (HLTGDEKAAV…VANALAHKYH (145 aa)) folds into the Globin domain. Thr13 is subject to Phosphothreonine. Ser45 is modified (phosphoserine). An N6-acetyllysine modification is found at Lys60. Position 64 (His64) interacts with heme b. Lys83 bears the N6-acetyllysine mark. Heme b is bound at residue His93. Residue Cys94 is modified to S-nitrosocysteine. Lys145 bears the N6-acetyllysine mark.

The protein belongs to the globin family. In terms of assembly, heterotetramer of two alpha chains and two beta chains. As to expression, red blood cells.

In terms of biological role, involved in oxygen transport from the lung to the various peripheral tissues. The polypeptide is Hemoglobin subunit beta (HBB) (Saimiri sciureus (Common squirrel monkey)).